Consider the following 250-residue polypeptide: 5'-nucleotidase SurE (250 aa).

A divalent metal cation is bound by residues D8, D9, S39, and N92.

It belongs to the SurE nucleotidase family. A divalent metal cation serves as cofactor.

It is found in the cytoplasm. It catalyses the reaction a ribonucleoside 5'-phosphate + H2O = a ribonucleoside + phosphate. Its function is as follows. Nucleotidase that shows phosphatase activity on nucleoside 5'-monophosphates. This is 5'-nucleotidase SurE from Vibrio cholerae serotype O1 (strain ATCC 39315 / El Tor Inaba N16961).